The sequence spans 142 residues: Large ribosomal subunit protein uL13 (142 aa).

This sequence belongs to the universal ribosomal protein uL13 family. In terms of assembly, part of the 50S ribosomal subunit.

Its function is as follows. This protein is one of the early assembly proteins of the 50S ribosomal subunit, although it is not seen to bind rRNA by itself. It is important during the early stages of 50S assembly. In Shigella boydii serotype 18 (strain CDC 3083-94 / BS512), this protein is Large ribosomal subunit protein uL13.